The chain runs to 355 residues: Histidinol-phosphate aminotransferase (355 aa).

K214 is subject to N6-(pyridoxal phosphate)lysine.

Belongs to the class-II pyridoxal-phosphate-dependent aminotransferase family. Histidinol-phosphate aminotransferase subfamily. In terms of assembly, homodimer. It depends on pyridoxal 5'-phosphate as a cofactor.

The catalysed reaction is L-histidinol phosphate + 2-oxoglutarate = 3-(imidazol-4-yl)-2-oxopropyl phosphate + L-glutamate. The protein operates within amino-acid biosynthesis; L-histidine biosynthesis; L-histidine from 5-phospho-alpha-D-ribose 1-diphosphate: step 7/9. The chain is Histidinol-phosphate aminotransferase (hisC) from Buchnera aphidicola subsp. Schizaphis graminum (strain Sg).